The primary structure comprises 49 residues: MTINLFFLTLTIKKRFKSLEEFEREQQIEQIYDEMKESQLKHLYLTNWR.

This is an uncharacterized protein from Bacillus subtilis (strain 168).